The sequence spans 118 residues: Mating-type P-specific polypeptide Pc (118 aa).

The HMG box DNA-binding region spans lysine 29–arginine 97.

It is found in the nucleus. In terms of biological role, mating type proteins are sequence specific DNA-binding proteins that act as master switches in yeast differentiation by controlling gene expression in a cell type-specific fashion. Required for conjugation and efficient meiosis. The protein is Mating-type P-specific polypeptide Pc (mat2-Pc) of Schizosaccharomyces pombe (Fission yeast).